Here is a 459-residue protein sequence, read N- to C-terminus: tRNA modification GTPase MnmE (459 aa).

Residues R20, E85, and R124 each contribute to the (6S)-5-formyl-5,6,7,8-tetrahydrofolate site. The TrmE-type G domain maps to 221–380 (GLSTVIIGRP…LEMAIQSLFF (160 aa)). N231 contributes to the K(+) binding site. GTP contacts are provided by residues 231–236 (NVGKSS), 250–256 (TDIPGTT), and 275–278 (DTAG). Position 235 (S235) interacts with Mg(2+). 3 residues coordinate K(+): T250, I252, and T255. T256 is a Mg(2+) binding site. K459 is a (6S)-5-formyl-5,6,7,8-tetrahydrofolate binding site.

Belongs to the TRAFAC class TrmE-Era-EngA-EngB-Septin-like GTPase superfamily. TrmE GTPase family. In terms of assembly, homodimer. Heterotetramer of two MnmE and two MnmG subunits. K(+) is required as a cofactor.

Its subcellular location is the cytoplasm. Exhibits a very high intrinsic GTPase hydrolysis rate. Involved in the addition of a carboxymethylaminomethyl (cmnm) group at the wobble position (U34) of certain tRNAs, forming tRNA-cmnm(5)s(2)U34. The sequence is that of tRNA modification GTPase MnmE from Bacillus pumilus (strain SAFR-032).